The primary structure comprises 141 residues: Large ribosomal subunit protein uL6 (141 aa).

Belongs to the universal ribosomal protein uL6 family.

The polypeptide is Large ribosomal subunit protein uL6 (Haemonchus contortus (Barber pole worm)).